Here is a 602-residue protein sequence, read N- to C-terminus: Aspartate--tRNA(Asp/Asn) ligase (602 aa).

Residue glutamate 176 participates in L-aspartate binding. The tract at residues 200 to 203 is aspartate; that stretch reads QQFK. Arginine 222 and histidine 452 together coordinate L-aspartate. ATP is bound at residue 222–224; the sequence is RDE. Glutamate 490 lines the ATP pocket. An L-aspartate-binding site is contributed by arginine 497. Residue 542-545 participates in ATP binding; it reads GIDR.

The protein belongs to the class-II aminoacyl-tRNA synthetase family. Type 1 subfamily. In terms of assembly, homodimer.

The protein localises to the cytoplasm. It carries out the reaction tRNA(Asx) + L-aspartate + ATP = L-aspartyl-tRNA(Asx) + AMP + diphosphate. In terms of biological role, aspartyl-tRNA synthetase with relaxed tRNA specificity since it is able to aspartylate not only its cognate tRNA(Asp) but also tRNA(Asn). Reaction proceeds in two steps: L-aspartate is first activated by ATP to form Asp-AMP and then transferred to the acceptor end of tRNA(Asp/Asn). The sequence is that of Aspartate--tRNA(Asp/Asn) ligase from Rickettsia bellii (strain OSU 85-389).